Consider the following 265-residue polypeptide: Small ribosomal subunit protein eS1 (265 aa).

Positions 234 to 256 (EGSTTTSKGVTSEGGEKVDRVDG) are disordered. The segment covering 247 to 256 (GGEKVDRVDG) has biased composition (basic and acidic residues).

The protein belongs to the eukaryotic ribosomal protein eS1 family. In terms of assembly, component of the small ribosomal subunit. Mature ribosomes consist of a small (40S) and a large (60S) subunit. The 40S subunit contains about 33 different proteins and 1 molecule of RNA (18S). The 60S subunit contains about 49 different proteins and 3 molecules of RNA (28S, 5.8S and 5S).

It localises to the cytoplasm. The polypeptide is Small ribosomal subunit protein eS1 (Aplysia californica (California sea hare)).